Reading from the N-terminus, the 399-residue chain is Arylacetamide deacetylase (399 aa).

The Cytoplasmic portion of the chain corresponds to 1-4 (MRKK). Residues 5-25 (YFGFLILGVLLAGYIYVPLPD) traverse the membrane as a helical; Signal-anchor for type II membrane protein segment. Topologically, residues 26–399 (NVEEPWKIML…QYINWLHENL (374 aa)) are lumenal. The Involved in the stabilization of the negatively charged intermediate by the formation of the oxyanion hole motif lies at 111–113 (HGG). Residues Cys116 and Cys340 are joined by a disulfide bond. Residue Ser189 is part of the active site. A glycan (N-linked (GlcNAc...) asparagine) is linked at Asn282. Catalysis depends on residues Asp343 and His373.

It belongs to the 'GDXG' lipolytic enzyme family.

The protein localises to the endoplasmic reticulum membrane. Its subcellular location is the microsome membrane. The catalysed reaction is a triacylglycerol + H2O = a diacylglycerol + a fatty acid + H(+). Functionally, displays cellular triglyceride lipase activity in liver, increases the levels of intracellular fatty acids derived from the hydrolysis of newly formed triglyceride stores and plays a role in very low-density lipoprotein assembly. Displays serine esterase activity in liver. Deacetylates a variety of arylacetamide substrates, including xenobiotic compounds and procarcinogens, converting them to the primary arylamide compounds and increasing their toxicity. This is Arylacetamide deacetylase (AADAC) from Bos taurus (Bovine).